The primary structure comprises 412 residues: Isocitrate dehydrogenase [NADP] cytoplasmic (412 aa).

NADP(+) contacts are provided by residues 76-78 (TIT) and Arg83. Thr78 lines the substrate pocket. Substrate contacts are provided by residues 95-101 (SPNGTIR), Arg110, and Arg133. Asp253 contributes to the Mn(2+) binding site. Residue Lys261 coordinates NADP(+). A Mn(2+)-binding site is contributed by Asp276. Residues 309–314 (GTVTRH) and Asn327 each bind NADP(+).

It belongs to the isocitrate and isopropylmalate dehydrogenases family. Homodimer. It depends on Mg(2+) as a cofactor. Mn(2+) is required as a cofactor.

It localises to the cytoplasm. The enzyme catalyses D-threo-isocitrate + NADP(+) = 2-oxoglutarate + CO2 + NADPH. The sequence is that of Isocitrate dehydrogenase [NADP] cytoplasmic (idhC) from Dictyostelium discoideum (Social amoeba).